The sequence spans 305 residues: Protoheme IX farnesyltransferase (305 aa).

Helical transmembrane passes span 31–51 (VMSL…YSVH), 52–72 (PFIA…AGAI), 96–118 (VIES…FFMA), 123–145 (LLAS…IWLK), 151–171 (NIVI…AAVS), 179–199 (IILF…LALF), 225–245 (ILIY…IGMN), 247–267 (FIYL…AGSL), and 281–301 (FAYS…TNTI).

It belongs to the UbiA prenyltransferase family. Protoheme IX farnesyltransferase subfamily.

It localises to the cell inner membrane. The catalysed reaction is heme b + (2E,6E)-farnesyl diphosphate + H2O = Fe(II)-heme o + diphosphate. The protein operates within porphyrin-containing compound metabolism; heme O biosynthesis; heme O from protoheme: step 1/1. Functionally, converts heme B (protoheme IX) to heme O by substitution of the vinyl group on carbon 2 of heme B porphyrin ring with a hydroxyethyl farnesyl side group. The chain is Protoheme IX farnesyltransferase from Rickettsia rickettsii (strain Iowa).